Reading from the N-terminus, the 160-residue chain is Class II hydrophobin 8 (160 aa).

Cystine bridges form between cysteine 92-cysteine 141, cysteine 102-cysteine 132, cysteine 103-cysteine 115, and cysteine 142-cysteine 153.

The protein belongs to the cerato-ulmin hydrophobin family. In terms of assembly, homodimer. Homodimers further self-assemble to form highly ordered films at water-air interfaces through intermolecular interactions.

The protein resides in the secreted. It is found in the cell wall. Its function is as follows. Aerial growth, conidiation, and dispersal of filamentous fungi in the environment rely upon a capability of their secreting small amphipathic proteins called hydrophobins (HPBs) with low sequence identity. Class I can self-assemble into an outermost layer of rodlet bundles on aerial cell surfaces, conferring cellular hydrophobicity that supports fungal growth, development and dispersal; whereas Class II form highly ordered films at water-air interfaces through intermolecular interactions but contribute nothing to the rodlet structure. This chain is Class II hydrophobin 8, found in Trichoderma asperellum (strain ATCC 204424 / CBS 433.97 / NBRC 101777).